A 445-amino-acid chain; its full sequence is Serine/threonine-protein kinase Nek2 (445 aa).

In terms of domain architecture, Protein kinase spans 8–271 (YEVLYTIGTG…VEEILENPLI (264 aa)). Residues 14 to 22 (IGTGSYGRC) and Lys-37 each bind ATP. Asp-141 serves as the catalytic Proton acceptor. Thr-170 bears the Phosphothreonine; by autocatalysis mark. Ser-171 carries the post-translational modification Phosphoserine; by autocatalysis. 2 positions are modified to phosphothreonine; by autocatalysis: Thr-175 and Thr-179. Ser-184 is subject to Phosphoserine. Ser-241 is subject to Phosphoserine; by autocatalysis. The interval 264 to 445 (EILENPLIAD…LKSRQILGMR (182 aa)) is interaction with PCNT. 2 positions are modified to phosphoserine: Ser-296 and Ser-300. The interval 301 to 445 (PVLSELKLKE…LKSRQILGMR (145 aa)) is interaction with CEP85. The stretch at 303 to 362 (LSELKLKEIQLQERERALKAREERLEQKEQELCVRERLAEDKLARAENLLKNYSLLKERK) forms a coiled coil. The segment at 306–334 (LKLKEIQLQERERALKAREERLEQKEQEL) is leucine-zipper. The segment at 329 to 445 (QKEQELCVRE…LKSRQILGMR (117 aa)) is necessary for interaction with MAD1L1. Residues 333 to 370 (ELCVRERLAEDKLARAENLLKNYSLLKERKFLSLASNP) form a required for microtubule binding and for localization to the centrosomes region. Phosphoserine; by STK3/MST2 is present on residues Ser-356 and Ser-365. A phosphoserine mark is found at Ser-387, Ser-390, Ser-397, and Ser-402. An interaction with SAV1 and STK3/MST2 region spans residues 403–439 (QLTSKSKCKDLKKRLHAAQLRAQALSDIEKNYQLKSR). Ser-406 carries the post-translational modification Phosphoserine; by STK3/MST2. The stretch at 406-430 (SKSKCKDLKKRLHAAQLRAQALSDI) forms a coiled coil. Ser-428 carries the phosphoserine modification. The residue at position 438 (Ser-438) is a Phosphoserine; by STK3/MST2.

This sequence belongs to the protein kinase superfamily. NEK Ser/Thr protein kinase family. NIMA subfamily. In terms of assembly, isoform 1, isoform 2 and isoform 4 form homo- and heterodimers. Interacts with NECAB3 and HMGA2. Isoform 1 interacts with CDC20, CTNB1, MAD1L1, MAPK, NEK11, NPM1, NDC80, PCNT and SGO1. Isoform 1 interacts with STK3/MST2 (via SARAH domain) and SAV1 (via SARAH domain). Isoform 1 and isoform 2 interact with MAD2L1. Isoform 1 and isoform 4 interact with PPP1CA and PPP1CC. Interacts with CEP68; the interaction leads to phosphorylation of CEP68. Interacts with CNTLN; the interaction leads to phosphorylation of CNTLN. Isoform 1 interacts with CEP85. Interacts with CCDC102B; the interaction leads to phosphorylation of CCDC102B. It depends on Mg(2+) as a cofactor. Activated by autophosphorylation. Protein phosphatase 1 represses autophosphorylation and activation of isoform 1 by dephosphorylation. Phosphorylation by STK3/MST2 is necessary for its localization to the centrosome. As to expression, isoform 1 and isoform 2 are expressed in peripheral blood T-cells and a wide variety of transformed cell types. Isoform 1 and isoform 4 are expressed in the testis. Up-regulated in various cancer cell lines, as well as primary breast tumors.

The protein localises to the nucleus. The protein resides in the nucleolus. It is found in the cytoplasm. It localises to the cytoskeleton. Its subcellular location is the microtubule organizing center. The protein localises to the centrosome. The protein resides in the spindle pole. It is found in the chromosome. It localises to the centromere. Its subcellular location is the kinetochore. The catalysed reaction is L-seryl-[protein] + ATP = O-phospho-L-seryl-[protein] + ADP + H(+). The enzyme catalyses L-threonyl-[protein] + ATP = O-phospho-L-threonyl-[protein] + ADP + H(+). With respect to regulation, isoform 1 is inhibited by ionizing radiation in the presence of PPP1CA. Its catalytic activity is inhibited by the inhibitor CCT241950. In the presence of this inhibitor, displays an autoinhibited conformation: Tyr-70 side chain points into the active site, interacts with the activation loop, and blocks the alphaC helix. Its function is as follows. Protein kinase which is involved in the control of centrosome separation and bipolar spindle formation in mitotic cells and chromatin condensation in meiotic cells. Regulates centrosome separation (essential for the formation of bipolar spindles and high-fidelity chromosome separation) by phosphorylating centrosomal proteins such as CROCC, CEP250 and NINL, resulting in their displacement from the centrosomes. Regulates kinetochore microtubule attachment stability in mitosis via phosphorylation of NDC80. Involved in regulation of mitotic checkpoint protein complex via phosphorylation of CDC20 and MAD2L1. Plays an active role in chromatin condensation during the first meiotic division through phosphorylation of HMGA2. Phosphorylates: PPP1CC; SGO1; NECAB3 and NPM1. Essential for localization of MAD2L1 to kinetochore and MAPK1 and NPM1 to the centrosome. Phosphorylates CEP68 and CNTLN directly or indirectly. NEK2-mediated phosphorylation of CEP68 promotes CEP68 dissociation from the centrosome and its degradation at the onset of mitosis. Involved in the regulation of centrosome disjunction. Phosphorylates CCDC102B either directly or indirectly which causes CCDC102B to dissociate from the centrosome and allows for centrosome separation. Phosphorylates and activates NEK11 in G1/S-arrested cells. In terms of biological role, not present in the nucleolus and, in contrast to isoform 1, does not phosphorylate and activate NEK11 in G1/S-arrested cells. This is Serine/threonine-protein kinase Nek2 (NEK2) from Homo sapiens (Human).